The following is a 194-amino-acid chain: MKYEISEQAKLPTRFGNFFTKSFREYGKNNTLFEHLVVFTHTLGETPLVRIHSECLTGDVFGSKKCDCGNELALAMEQIAHNTEGGMLIYLRQEGRGIGLFNKINAYALQDKGYDTVEANQQLGFAGDMRSYEIVGEIFKHFHITHINLLTNNPRKIDALAPYAKVVRHSIITPSNPHNQAYLEVKKQKLGHLL.

Residue 50–54 coordinates GTP; it reads RIHSE. Zn(2+) is bound by residues C55, C66, and C68. Residues 94-96 and T116 each bind GTP; that span reads EGR. Catalysis depends on D128, which acts as the Proton acceptor. Catalysis depends on R130, which acts as the Nucleophile. The GTP site is built by T151 and K156.

This sequence belongs to the GTP cyclohydrolase II family. The cofactor is Zn(2+).

It catalyses the reaction GTP + 4 H2O = 2,5-diamino-6-hydroxy-4-(5-phosphoribosylamino)-pyrimidine + formate + 2 phosphate + 3 H(+). It participates in cofactor biosynthesis; riboflavin biosynthesis; 5-amino-6-(D-ribitylamino)uracil from GTP: step 1/4. Its function is as follows. Catalyzes the conversion of GTP to 2,5-diamino-6-ribosylamino-4(3H)-pyrimidinone 5'-phosphate (DARP), formate and pyrophosphate. The sequence is that of GTP cyclohydrolase-2 from Helicobacter hepaticus (strain ATCC 51449 / 3B1).